The sequence spans 184 residues: Putative rRNA methyltransferase YlbH (184 aa).

The tract at residues 1-22 (MRVISGSKKGRSLKAVAGTSTR) is disordered.

This sequence belongs to the methyltransferase superfamily. RsmD family.

May catalyze the S-adenosyl-L-methionine-dependent methylation of a specific base in rRNA. The sequence is that of Putative rRNA methyltransferase YlbH (ylbH) from Bacillus subtilis (strain 168).